The chain runs to 226 residues: Clarin-3 (226 aa).

A helical transmembrane segment spans residues 8-28 (LMFLSSFFTSLGSFIVICSIL). N83 carries N-linked (GlcNAc...) asparagine glycosylation. 3 helical membrane passes run 92 to 112 (VTIL…GFTF), 129 to 149 (VYTW…LFVA), and 181 to 201 (FWLI…IIFY).

This sequence belongs to the clarin family.

It is found in the membrane. In Homo sapiens (Human), this protein is Clarin-3 (CLRN3).